A 120-amino-acid polypeptide reads, in one-letter code: Large ribosomal subunit protein uL18 (120 aa).

It belongs to the universal ribosomal protein uL18 family. In terms of assembly, part of the 50S ribosomal subunit; part of the 5S rRNA/L5/L18/L25 subcomplex. Contacts the 5S and 23S rRNAs.

This is one of the proteins that bind and probably mediate the attachment of the 5S RNA into the large ribosomal subunit, where it forms part of the central protuberance. This chain is Large ribosomal subunit protein uL18, found in Methylobacterium sp. (strain 4-46).